The primary structure comprises 291 residues: Methionine aminopeptidase (291 aa).

Histidine 118 is a binding site for substrate. The a divalent metal cation site is built by aspartate 135, aspartate 146, and histidine 209. Histidine 216 is a substrate binding site. 2 residues coordinate a divalent metal cation: glutamate 241 and glutamate 273.

The protein belongs to the peptidase M24A family. Methionine aminopeptidase type 1 subfamily. As to quaternary structure, monomer. Requires Co(2+) as cofactor. Zn(2+) is required as a cofactor. It depends on Mn(2+) as a cofactor. The cofactor is Fe(2+).

The catalysed reaction is Release of N-terminal amino acids, preferentially methionine, from peptides and arylamides.. Its function is as follows. Removes the N-terminal methionine from nascent proteins. The N-terminal methionine is often cleaved when the second residue in the primary sequence is small and uncharged (Met-Ala-, Cys, Gly, Pro, Ser, Thr, or Val). Requires deformylation of the N(alpha)-formylated initiator methionine before it can be hydrolyzed. The protein is Methionine aminopeptidase of Chlamydia muridarum (strain MoPn / Nigg).